The chain runs to 184 residues: ATP-dependent protease subunit HslV (184 aa).

Threonine 12 is a catalytic residue. Residues glycine 167, cysteine 170, and threonine 173 each contribute to the Na(+) site.

Belongs to the peptidase T1B family. HslV subfamily. In terms of assembly, a double ring-shaped homohexamer of HslV is capped on each side by a ring-shaped HslU homohexamer. The assembly of the HslU/HslV complex is dependent on binding of ATP.

The protein localises to the cytoplasm. It catalyses the reaction ATP-dependent cleavage of peptide bonds with broad specificity.. With respect to regulation, allosterically activated by HslU binding. Functionally, protease subunit of a proteasome-like degradation complex believed to be a general protein degrading machinery. The polypeptide is ATP-dependent protease subunit HslV (Wolbachia sp. subsp. Drosophila simulans (strain wRi)).